Reading from the N-terminus, the 310-residue chain is Deoxyribonuclease gamma (310 aa).

Residues 1-25 (MSLHPASPRLASLLLFILALHDTLA) form the signal peptide. Positions 40–56 (KKENHEAMDIIVKIIKR) match the Bipartite nuclear localization signal motif. Residues Glu-105 and His-160 contribute to the active site. A disulfide bridge links Cys-199 with Cys-236. Residues 289 to 310 (SRAFTNNRKSVSLKKRKKGNRS) are not required for free DNA-nuclease activity but required for activity towards liposome-coated DNA. The Nuclear localization signal signature appears at 301 to 307 (LKKRKKG).

This sequence belongs to the DNase I family. Ca(2+) is required as a cofactor. Requires Mg(2+) as cofactor. Post-translationally, poly-ADP-ribosylated by PARP1. ADP-ribosylation negatively regulates enzymatic activity during apoptosis. As to expression, expressed at high levels in liver, spleen and testes. Expressed at lower levels in heart, lungs, skeletal muscle and kidney. Not expressed in brain. Predominantly expressed in macrophages; at protein level. Secreted by mononuclear phagocytes.

Its subcellular location is the nucleus. It localises to the endoplasmic reticulum. The protein localises to the secreted. With respect to regulation, inhibited by zinc. Inhibited by heparin and proteolysis by plasmin. In terms of biological role, has DNA hydrolytic activity. Is capable of both single- and double-stranded DNA cleavage, producing DNA fragments with 3'-OH ends. Can cleave chromatin to nucleosomal units and cleaves nucleosomal and liposome-coated DNA. Acts in internucleosomal DNA fragmentation (INDF) during apoptosis and necrosis. The role in apoptosis includes myogenic and neuronal differentiation, and BCR-mediated clonal deletion of self-reactive B cells. Is active on chromatin in apoptotic cell-derived membrane-coated microparticles and thus suppresses anti-DNA autoimmunity. Together with DNASE1, plays a key role in degrading neutrophil extracellular traps (NETs). NETs are mainly composed of DNA fibers and are released by neutrophils to bind pathogens during inflammation. Degradation of intravascular NETs by DNASE1 and DNASE1L3 is required to prevent formation of clots that obstruct blood vessels and cause organ damage following inflammation. The chain is Deoxyribonuclease gamma from Mus musculus (Mouse).